Here is a 259-residue protein sequence, read N- to C-terminus: Glucosamine-6-phosphate deaminase (259 aa).

D66 acts as the Proton acceptor; for enolization step in catalysis. Residue D135 is the For ring-opening step of the active site. Catalysis depends on H137, which acts as the Proton acceptor; for ring-opening step. The For ring-opening step role is filled by E142.

This sequence belongs to the glucosamine/galactosamine-6-phosphate isomerase family. NagB subfamily.

It catalyses the reaction alpha-D-glucosamine 6-phosphate + H2O = beta-D-fructose 6-phosphate + NH4(+). It functions in the pathway amino-sugar metabolism; N-acetylneuraminate degradation; D-fructose 6-phosphate from N-acetylneuraminate: step 5/5. Functionally, catalyzes the reversible isomerization-deamination of glucosamine 6-phosphate (GlcN6P) to form fructose 6-phosphate (Fru6P) and ammonium ion. This is Glucosamine-6-phosphate deaminase from Rhodococcus opacus (strain B4).